We begin with the raw amino-acid sequence, 293 residues long: Chorion protein S36 (293 aa).

The N-terminal stretch at 1–20 is a signal peptide; it reads MQLGLWFGLFAVAAAPLVSA. Positions 235–253 are enriched in polar residues; it reads QSYGQPQAYNQPQAYSQPQ. Residues 235–293 form a disordered region; the sequence is QSYGQPQAYNQPQAYSQPQSYGNSGSSGAGNSGPSSDSYAAGAETPLYASPAPYGSPSY.

This sequence belongs to the chorion protein S36 family.

The protein localises to the secreted. Chorion membrane (egg shell) protein; protects the egg from the environment. The chain is Chorion protein S36 (Cp36) from Drosophila virilis (Fruit fly).